Consider the following 179-residue polypeptide: ATP synthase subunit delta (179 aa).

It belongs to the ATPase delta chain family. In terms of assembly, F-type ATPases have 2 components, F(1) - the catalytic core - and F(0) - the membrane proton channel. F(1) has five subunits: alpha(3), beta(3), gamma(1), delta(1), epsilon(1). F(0) has three main subunits: a(1), b(2) and c(10-14). The alpha and beta chains form an alternating ring which encloses part of the gamma chain. F(1) is attached to F(0) by a central stalk formed by the gamma and epsilon chains, while a peripheral stalk is formed by the delta and b chains.

The protein localises to the cell membrane. Its function is as follows. F(1)F(0) ATP synthase produces ATP from ADP in the presence of a proton or sodium gradient. F-type ATPases consist of two structural domains, F(1) containing the extramembraneous catalytic core and F(0) containing the membrane proton channel, linked together by a central stalk and a peripheral stalk. During catalysis, ATP synthesis in the catalytic domain of F(1) is coupled via a rotary mechanism of the central stalk subunits to proton translocation. Functionally, this protein is part of the stalk that links CF(0) to CF(1). It either transmits conformational changes from CF(0) to CF(1) or is implicated in proton conduction. In Natranaerobius thermophilus (strain ATCC BAA-1301 / DSM 18059 / JW/NM-WN-LF), this protein is ATP synthase subunit delta.